The primary structure comprises 420 residues: Trophoblast glycoprotein (420 aa).

A signal peptide spans 1-34 (MPGGCSRGPAAGDGRLRLARLALVLLGWVSSSSS). The Extracellular segment spans residues 35 to 355 (TSSASSSSSS…PILPPSLQTS (321 aa)). Residues 53 to 91 (SAQPPLPDQCPALCECSEAARTVKCVNRNLTEVPTDLPL) enclose the LRRNT domain. Cystine bridges form between C62–C68 and C66–C77. The N-linked (GlcNAc...) asparagine glycan is linked to N81. LRR repeat units follow at residues 92–113 (YVRNLFLTGNQLAVLPAGAFAR), 116–139 (PLAELAALNLSGSRLDEVRGGAFE), 141–163 (LPSLRQLDLSHNPLAYLSPFAFS), 172–204 (PSPLVELILNHIVPPDDKRQNRSFEGMVAAALV), 209–232 (LQGLHLLELASNHFLYLPRDVLAQ), 233–255 (LPSLRYLDLSNNSLVSLTYVSFR), and 256–275 (NLTHLESLHLEDNALKVLHN). A glycan (N-linked (GlcNAc...) asparagine) is linked at N124. A glycan (N-linked (GlcNAc...) asparagine) is linked at N275. One can recognise an LRRCT domain in the interval 283 to 346 (GLPHVRVFLD…LNSADLDCDP (64 aa)). Disulfide bonds link C298–C323 and C300–C344. Residues 356–376 (YVFLGIVLALIGAIFLLVLYL) form a helical membrane-spanning segment. Over 377-420 (NRKGIKKWMHNIRDACRDHMEGYHYRYEINADPRLTNLSSNSDV) the chain is Cytoplasmic. At S418 the chain carries Phosphoserine.

Post-translationally, highly glycosylated.

The protein resides in the cell membrane. Its function is as follows. May function as an inhibitor of Wnt/beta-catenin signaling by indirectly interacting with LRP6 and blocking Wnt3a-dependent LRP6 internalization. This is Trophoblast glycoprotein (TPBG) from Macaca fascicularis (Crab-eating macaque).